The chain runs to 860 residues: Endo-1,4-beta-xylanase B (860 aa).

Positions 1–20 (MKFSSANKILFSGLVASANA) are cleaved as a signal peptide. The 304-residue stretch at 21–324 (YDLLKDYAGD…KPVYNTLLNI (304 aa)) folds into the GH10 domain. Glu-144 acts as the Proton donor in catalysis. Residue Glu-255 is the Nucleophile of the active site. Residues Cys-278 and Cys-284 are joined by a disulfide bond. Asn-295, Asn-309, Asn-359, and Asn-374 each carry an N-linked (GlcNAc...) asparagine glycan. Composition is skewed to polar residues over residues 330–362 (RPAS…NKSK) and 371–418 (LPGN…NSKT). A disordered region spans residues 330–793 (RPASSSAKTL…TKTLPGGACK (464 aa)). Copy 1 of the repeat occupies 375 to 382 (KSKTLPGG). A 47 X 8 AA tandem repeats of [SKN]-S-K-T-L-P-G-G region spans residues 375–782 (KSKTLPGGNS…GGKSKTLPGG (408 aa)). Residue Asn-390 is glycosylated (N-linked (GlcNAc...) asparagine). Residues 391–398 (KSKTLPGG) form repeat 2. N-linked (GlcNAc...) asparagine glycosylation occurs at Asn-406. 45 repeat units span residues 415 to 422 (NSKTLPGG), 431 to 438 (NSKTLPGG), 439 to 446 (KSKTLPGG), 447 to 454 (NSKTLPGG), 455 to 462 (KSKTLPGG), 463 to 470 (NSKTLPGG), 471 to 478 (SSKTLPGG), 479 to 486 (KSKTLPGG), 487 to 494 (NSKTLPGG), 495 to 502 (SSKTLPGG), 503 to 510 (KSKTLPGG), 511 to 518 (SSKTLPGG), 519 to 526 (KSKTLPGG), 527 to 534 (NSKTLPGG), 535 to 542 (NSKTLPGG), 543 to 550 (SSKTLPGG), 551 to 558 (KSKTLPGG), 559 to 566 (NSKTLPGG), 567 to 574 (SSKTLPGG), 575 to 582 (KSKTLPGG), 583 to 590 (NSKTLPGG), 591 to 598 (NSKTLPGG), 599 to 606 (KSKTLPGG), 607 to 614 (NSKTLPGG), 615 to 622 (SSKTLPGG), 623 to 630 (KSKTLPGG), 631 to 638 (SSKTLPGG), 639 to 646 (KSKTLPGG), 647 to 654 (NSKTLPGG), 655 to 662 (NSKTLPGG), 663 to 670 (SSKTLPGG), 671 to 678 (KSKTLPGG), 679 to 686 (SSKTLPGG), 687 to 694 (KSKTLPGG), 695 to 702 (NSKTLPGG), 703 to 710 (KSKTLPGG), 711 to 718 (NSKTLPGG), 719 to 726 (KSKTLPGG), 727 to 734 (NSKTLPGG), 735 to 742 (KSKTLPGG), 743 to 750 (NSKTLPGG), 751 to 758 (SSKTLPGG), 759 to 766 (KSKTLPGG), 767 to 774 (NSKTLPGG), and 775 to 782 (KSKTLPGG). Polar residues-rich tracts occupy residues 461–474 (GGNS…SSKT) and 485–498 (GGNS…SSKT). 4 stretches are compositionally biased toward polar residues: residues 525–546 (GGNS…SSKT), 557–570 (GGNS…SSKT), 581–594 (GGNS…NSKT), and 605–618 (GGNS…SSKT). The segment covering 645–666 (GGNSKTLPGGNSKTLPGGSSKT) has biased composition (polar residues). Polar residues predominate over residues 741–754 (GGNSKTLPGGSSKT). Residues 824–860 (NCAAKWGQCGGNGFNGPTCCQNGSRCQFVNEWYSQCL) form the CBM1 domain. N-linked (GlcNAc...) asparagine glycosylation is present at Asn-845.

Belongs to the glycosyl hydrolase 10 (cellulase F) family.

Its subcellular location is the secreted. The enzyme catalyses Endohydrolysis of (1-&gt;4)-beta-D-xylosidic linkages in xylans.. The protein operates within glycan degradation; xylan degradation. In terms of biological role, endo-1,4-beta-xylanase involved in the hydrolysis of xylan, a major structural heterogeneous polysaccharide found in plant biomass representing the second most abundant polysaccharide in the biosphere, after cellulose. Hydrolyzes both unsubstituted (oat spelts) and highly substituted (rye and wheat) forms of arabinoxylanslans. The protein is Endo-1,4-beta-xylanase B (xynB) of Neocallimastix patriciarum (Rumen fungus).